Here is a 492-residue protein sequence, read N- to C-terminus: Bifunctional purine biosynthesis protein PurH (492 aa).

In terms of domain architecture, MGS-like spans 1-144 (MKKAILSVSN…KNFKHVITVV (144 aa)).

It belongs to the PurH family.

The enzyme catalyses (6R)-10-formyltetrahydrofolate + 5-amino-1-(5-phospho-beta-D-ribosyl)imidazole-4-carboxamide = 5-formamido-1-(5-phospho-D-ribosyl)imidazole-4-carboxamide + (6S)-5,6,7,8-tetrahydrofolate. It catalyses the reaction IMP + H2O = 5-formamido-1-(5-phospho-D-ribosyl)imidazole-4-carboxamide. The protein operates within purine metabolism; IMP biosynthesis via de novo pathway; 5-formamido-1-(5-phospho-D-ribosyl)imidazole-4-carboxamide from 5-amino-1-(5-phospho-D-ribosyl)imidazole-4-carboxamide (10-formyl THF route): step 1/1. It participates in purine metabolism; IMP biosynthesis via de novo pathway; IMP from 5-formamido-1-(5-phospho-D-ribosyl)imidazole-4-carboxamide: step 1/1. The chain is Bifunctional purine biosynthesis protein PurH from Staphylococcus saprophyticus subsp. saprophyticus (strain ATCC 15305 / DSM 20229 / NCIMB 8711 / NCTC 7292 / S-41).